The sequence spans 861 residues: Rod cGMP-specific 3',5'-cyclic phosphodiesterase subunit alpha (861 aa).

At Gly2 the chain carries N-acetylglycine. 2 consecutive GAF domains span residues 73-222 (QAER…NLIM) and 254-431 (DIER…GWSV). In terms of domain architecture, PDEase spans 483–816 (EEEELAEILQ…KEWKALADEY (334 aa)). His559 functions as the Proton donor in the catalytic mechanism. A divalent metal cation contacts are provided by His563, His599, Asp600, and Asp720. The tract at residues 821 to 861 (KALEEEKQKQQTAKQGAAGDQPGGNPSPAGGAPASKSCCIQ) is disordered. A compositionally biased stretch (low complexity) spans 830–861 (QQTAKQGAAGDQPGGNPSPAGGAPASKSCCIQ). Cysteine methyl ester is present on Cys858. Cys858 is lipidated: S-farnesyl cysteine. A propeptide spans 859–861 (CIQ) (removed in mature form).

It belongs to the cyclic nucleotide phosphodiesterase family. Oligomer composed of two catalytic chains (alpha and beta), an inhibitory chain (gamma) and the delta chain. A divalent metal cation is required as a cofactor.

It localises to the cell membrane. The protein resides in the cell projection. Its subcellular location is the cilium. The protein localises to the photoreceptor outer segment. It catalyses the reaction 3',5'-cyclic GMP + H2O = GMP + H(+). In terms of biological role, rod-specific cGMP phosphodiesterase that catalyzes the hydrolysis of 3',5'-cyclic GMP. This protein participates in processes of transmission and amplification of the visual signal. This Canis lupus familiaris (Dog) protein is Rod cGMP-specific 3',5'-cyclic phosphodiesterase subunit alpha.